We begin with the raw amino-acid sequence, 573 residues long: Proton-coupled zinc antiporter SLC30A9, mitochondrial (573 aa).

The interval 66–108 (NCSTSGSGKDGSPTRPEEPKTTEKAQAAQPAAKGAGSKPQGLT) is disordered. Over residues 90 to 104 (AQAAQPAAKGAGSKP) the composition is skewed to low complexity. 5 consecutive transmembrane segments (helical) span residues 244-264 (VVMV…LAWV), 319-339 (GVGI…MGLL), 347-367 (LLWA…TLLV), 397-417 (VVLL…GCMG), and 429-449 (SLGS…LIYT). The LXXLL motif signature appears at 467-471 (LTEFL).

It belongs to the cation diffusion facilitator (CDF) transporter (TC 2.A.4) family. SLC30A subfamily.

Its subcellular location is the mitochondrion membrane. It localises to the nucleus. It is found in the endoplasmic reticulum. It carries out the reaction Zn(2+)(in) + 2 H(+)(out) = Zn(2+)(out) + 2 H(+)(in). Mitochondrial proton-coupled zinc ion antiporter mediating the export of zinc from the mitochondria and involved in zinc homeostasis, zinc mobilization as well as mitochondrial morphology and health. In nucleus, may function as a secondary coactivator for nuclear receptors. In Danio rerio (Zebrafish), this protein is Proton-coupled zinc antiporter SLC30A9, mitochondrial (slc30a9).